The primary structure comprises 143 residues: uncharacterized protein (143 aa).

It belongs to the OsmC/Ohr family.

This is an uncharacterized protein from Acinetobacter baylyi (strain ATCC 33305 / BD413 / ADP1).